A 156-amino-acid chain; its full sequence is Small ribosomal subunit protein uS7 (156 aa).

The protein belongs to the universal ribosomal protein uS7 family. In terms of assembly, part of the 30S ribosomal subunit. Contacts proteins S9 and S11.

Functionally, one of the primary rRNA binding proteins, it binds directly to 16S rRNA where it nucleates assembly of the head domain of the 30S subunit. Is located at the subunit interface close to the decoding center, probably blocks exit of the E-site tRNA. In Shewanella amazonensis (strain ATCC BAA-1098 / SB2B), this protein is Small ribosomal subunit protein uS7.